Consider the following 209-residue polypeptide: 3-demethoxyubiquinol 3-hydroxylase (209 aa).

Residues Glu-58, Glu-88, His-91, Glu-140, Glu-172, and His-175 each coordinate Fe cation.

It belongs to the COQ7 family. Fe cation is required as a cofactor.

It localises to the cell membrane. The enzyme catalyses a 5-methoxy-2-methyl-3-(all-trans-polyprenyl)benzene-1,4-diol + AH2 + O2 = a 3-demethylubiquinol + A + H2O. It participates in cofactor biosynthesis; ubiquinone biosynthesis. Catalyzes the hydroxylation of 2-nonaprenyl-3-methyl-6-methoxy-1,4-benzoquinol during ubiquinone biosynthesis. The sequence is that of 3-demethoxyubiquinol 3-hydroxylase from Polaromonas sp. (strain JS666 / ATCC BAA-500).